Reading from the N-terminus, the 343-residue chain is Thymidine kinase (343 aa).

G27–S34 is a binding site for ATP. E56 (proton acceptor) is an active-site residue. Positions 74 and 98 each coordinate substrate. Position 188 (R188) interacts with ATP. A substrate-binding site is contributed by R194.

This sequence belongs to the herpesviridae thymidine kinase family. Homodimer.

The catalysed reaction is thymidine + ATP = dTMP + ADP + H(+). Its function is as follows. Catalyzes the transfer of the gamma-phospho group of ATP to thymidine to generate dTMP in the salvage pathway of pyrimidine synthesis. The dTMP serves as a substrate for DNA polymerase during viral DNA replication. Allows the virus to be reactivated and to grow in non-proliferative cells lacking a high concentration of phosphorylated nucleic acid precursors. In Felidae (cat family), this protein is Thymidine kinase.